We begin with the raw amino-acid sequence, 392 residues long: 5-azacytidine-induced protein 2 (392 aa).

The homodimerization stretch occupies residues 1-197; sequence MDALVEDDIC…IELQKAKQTD (197 aa). 2 coiled-coil regions span residues 40-76 and 102-196; these read ALVT…LIAR and DRDN…AKQT. Positions 216–257 are interaction with TBK1 and IKBKE; that stretch reads SDNMQHAYWELKREMSNLHLVTQVQAELLRKLKTSTAIKKAC. Phosphoserine occurs at positions 318 and 353.

In terms of assembly, homodimer. Interacts with IKBKE. Interacts with TBK1. Interacts with TICAM1. Interacts with TAX1BP1. Interacts with CALCOCO2. (Microbial infection) Interacts with vaccinia virus protein C6. In terms of processing, ubiquitinated via 'Lys-48'-linked polyubiquitination by TRIM38, leading to its degradation. In terms of tissue distribution, widely expressed. Abundant expression seen in the pancreas and testis.

The protein localises to the cytoplasm. In terms of biological role, adapter protein which binds TBK1 and IKBKE playing a role in antiviral innate immunity. Activates serine/threonine-protein kinase TBK1 and facilitates its oligomerization. Enhances the phosphorylation of NF-kappa-B p65 subunit RELA by TBK1. Promotes TBK1-induced as well as TNF-alpha or PMA-induced activation of NF-kappa-B. Participates in IFNB promoter activation via TICAM1. This is 5-azacytidine-induced protein 2 (AZI2) from Homo sapiens (Human).